Reading from the N-terminus, the 320-residue chain is Chitinase 3 (320 aa).

A signal peptide spans 1-18 (MRALALAVVAMAVVAVRG). One can recognise a Chitin-binding type-1 domain in the interval 19–59 (EQCGSQAGGALCPNCLCCSQYGWCGSTSDYCGAGCQSQCSG). 8 disulfides stabilise this stretch: cysteine 21-cysteine 36, cysteine 30-cysteine 42, cysteine 33-cysteine 61, cysteine 35-cysteine 49, cysteine 53-cysteine 57, cysteine 97-cysteine 159, cysteine 172-cysteine 180, and cysteine 279-cysteine 311. Glutamate 141 functions as the Proton donor in the catalytic mechanism.

It belongs to the glycosyl hydrolase 19 family. Chitinase class I subfamily. As to expression, expressed at low levels in roots, leaves, sheaths and meristems.

It catalyses the reaction Random endo-hydrolysis of N-acetyl-beta-D-glucosaminide (1-&gt;4)-beta-linkages in chitin and chitodextrins.. Its function is as follows. Hydrolyzes chitin and plays a role in defense against fungal pathogens containing chitin. Inhibits the growth of T.reesei fungus on plate assay. This chain is Chitinase 3 (Cht3), found in Oryza sativa subsp. japonica (Rice).